A 424-amino-acid polypeptide reads, in one-letter code: Virion nicking-joining enzyme (424 aa).

Belongs to the orthopoxvirus OPG042 family.

The protein localises to the virion. Its function is as follows. DNA nicking enzyme that cleaves extruded cruciform DNA at its tip. Probably nicks viral hairpins. This chain is Virion nicking-joining enzyme (OPG042), found in Cynomys gunnisoni (Gunnison's prairie dog).